The following is a 478-amino-acid chain: Transposase for insertion sequence element IS231B (478 aa).

This sequence belongs to the transposase 11 family.

In terms of biological role, involved in the transposition of the insertion sequence. In Bacillus thuringiensis subsp. berliner, this protein is Transposase for insertion sequence element IS231B.